Here is a 678-residue protein sequence, read N- to C-terminus: Methionine--tRNA ligase (678 aa).

The 'HIGH' region signature appears at Pro18–His28. Zn(2+)-binding residues include Cys149, Cys152, Cys162, and Cys165. Positions Lys334–Ser338 match the 'KMSKS' region motif. ATP is bound at residue Lys337. In terms of domain architecture, tRNA-binding spans Asp577–Met678.

The protein belongs to the class-I aminoacyl-tRNA synthetase family. MetG type 1 subfamily. Homodimer. Zn(2+) is required as a cofactor.

It is found in the cytoplasm. The enzyme catalyses tRNA(Met) + L-methionine + ATP = L-methionyl-tRNA(Met) + AMP + diphosphate. Is required not only for elongation of protein synthesis but also for the initiation of all mRNA translation through initiator tRNA(fMet) aminoacylation. The protein is Methionine--tRNA ligase of Marinobacter nauticus (strain ATCC 700491 / DSM 11845 / VT8) (Marinobacter aquaeolei).